Reading from the N-terminus, the 203-residue chain is MQERMAKNVIEISRTTKETDISLKLLVYGNGNAQIQSGIGFFDHMLQSLTKHSLIDLELACKGDTFIDGHHSVEDCGIVLGQGLAQGIYPAAGIERFGNASIVMDEACVECDIDVSNRAFLVFETNAYKLPFKGRVGELDVELVEEFFRALCFNAHLSAHIVLKRGKNLHHIIEAMFKAFGVSLRRALTLNPRILTPSTKGVL.

The protein belongs to the imidazoleglycerol-phosphate dehydratase family.

The protein resides in the cytoplasm. It catalyses the reaction D-erythro-1-(imidazol-4-yl)glycerol 3-phosphate = 3-(imidazol-4-yl)-2-oxopropyl phosphate + H2O. It participates in amino-acid biosynthesis; L-histidine biosynthesis; L-histidine from 5-phospho-alpha-D-ribose 1-diphosphate: step 6/9. The sequence is that of Imidazoleglycerol-phosphate dehydratase from Helicobacter hepaticus (strain ATCC 51449 / 3B1).